Consider the following 130-residue polypeptide: Ribonuclease P protein component 2 (130 aa).

This sequence belongs to the eukaryotic/archaeal RNase P protein component 2 family. In terms of assembly, consists of a catalytic RNA component and at least 4-5 protein subunits.

It localises to the cytoplasm. The enzyme catalyses Endonucleolytic cleavage of RNA, removing 5'-extranucleotides from tRNA precursor.. Its function is as follows. Part of ribonuclease P, a protein complex that generates mature tRNA molecules by cleaving their 5'-ends. The chain is Ribonuclease P protein component 2 from Methanococcus maripaludis (strain C7 / ATCC BAA-1331).